The primary structure comprises 436 residues: Enolase (436 aa).

Gln-167 lines the (2R)-2-phosphoglycerate pocket. Residue Glu-209 is the Proton donor of the active site. Mg(2+)-binding residues include Asp-246, Glu-291, and Asp-318. (2R)-2-phosphoglycerate is bound by residues Lys-343, Arg-372, Ser-373, and Lys-394. Residue Lys-343 is the Proton acceptor of the active site.

This sequence belongs to the enolase family. Component of the RNA degradosome, a multiprotein complex involved in RNA processing and mRNA degradation. Mg(2+) is required as a cofactor.

The protein resides in the cytoplasm. It localises to the secreted. It is found in the cell surface. It carries out the reaction (2R)-2-phosphoglycerate = phosphoenolpyruvate + H2O. It participates in carbohydrate degradation; glycolysis; pyruvate from D-glyceraldehyde 3-phosphate: step 4/5. Its function is as follows. Catalyzes the reversible conversion of 2-phosphoglycerate (2-PG) into phosphoenolpyruvate (PEP). It is essential for the degradation of carbohydrates via glycolysis. This chain is Enolase, found in Actinobacillus pleuropneumoniae serotype 5b (strain L20).